We begin with the raw amino-acid sequence, 352 residues long: Ion-translocating oxidoreductase complex subunit D (352 aa).

Transmembrane regions (helical) follow at residues 20–40, 42–62, 69–91, and 123–143; these read IMLLVVIAALPGIAAQTWFFG, GTLFQIVLAAITALVAEAIVL, VASHLQDYSALLTGLLLAVSIPP, and PAMIGYVVLLISFPVQMTSWL. At T187 the chain carries FMN phosphoryl threonine. 5 consecutive transmembrane segments (helical) span residues 215–235, 242–262, 267–287, 301–321, and 322–342; these read LAGVGWQWVNLAWLVGGVFLL, WHIPVSFLLTLALCAALGWLF, LASPQLHLLSGATMLGAFFIL, LIFGALAGVLVWLIRSFGGYP, and DGVAFAVLLANITVPLIDYYT.

It belongs to the NqrB/RnfD family. In terms of assembly, the complex is composed of six subunits: RsxA, RsxB, RsxC, RsxD, RsxE and RsxG. FMN serves as cofactor.

Its subcellular location is the cell inner membrane. Functionally, part of a membrane-bound complex that couples electron transfer with translocation of ions across the membrane. Required to maintain the reduced state of SoxR. The sequence is that of Ion-translocating oxidoreductase complex subunit D from Salmonella dublin (strain CT_02021853).